We begin with the raw amino-acid sequence, 522 residues long: Peptide chain release factor 3 (522 aa).

Residues 9-276 enclose the tr-type G domain; it reads KKRRTFAIIS…SFVNLAPAPQ (268 aa). GTP-binding positions include 18 to 25, 86 to 90, and 140 to 143; these read SHPDAGKT, DTPGH, and NKLD.

It belongs to the TRAFAC class translation factor GTPase superfamily. Classic translation factor GTPase family. PrfC subfamily.

Its subcellular location is the cytoplasm. Its function is as follows. Increases the formation of ribosomal termination complexes and stimulates activities of RF-1 and RF-2. It binds guanine nucleotides and has strong preference for UGA stop codons. It may interact directly with the ribosome. The stimulation of RF-1 and RF-2 is significantly reduced by GTP and GDP, but not by GMP. The protein is Peptide chain release factor 3 of Lactobacillus gasseri (strain ATCC 33323 / DSM 20243 / BCRC 14619 / CIP 102991 / JCM 1131 / KCTC 3163 / NCIMB 11718 / NCTC 13722 / AM63).